Here is a 276-residue protein sequence, read N- to C-terminus: Large ribosomal subunit protein uL2 (276 aa).

Positions Thr-219–Lys-276 are disordered.

It belongs to the universal ribosomal protein uL2 family. In terms of assembly, part of the 50S ribosomal subunit. Forms a bridge to the 30S subunit in the 70S ribosome.

One of the primary rRNA binding proteins. Required for association of the 30S and 50S subunits to form the 70S ribosome, for tRNA binding and peptide bond formation. It has been suggested to have peptidyltransferase activity; this is somewhat controversial. Makes several contacts with the 16S rRNA in the 70S ribosome. This is Large ribosomal subunit protein uL2 from Oceanobacillus iheyensis (strain DSM 14371 / CIP 107618 / JCM 11309 / KCTC 3954 / HTE831).